Reading from the N-terminus, the 393-residue chain is Dual-specificity RNA methyltransferase RlmN (393 aa).

The tract at residues 1–22 (MSEQLLSELSPVAATSPSPAPA) is disordered. Low complexity predominate over residues 10–22 (SPVAATSPSPAPA). The active-site Proton acceptor is the Glu-114. One can recognise a Radical SAM core domain in the interval 120–358 (EDDRATLCVS…TTIVRKTRGD (239 aa)). Cys-127 and Cys-364 form a disulfide bridge. 3 residues coordinate [4Fe-4S] cluster: Cys-134, Cys-138, and Cys-141. S-adenosyl-L-methionine-binding positions include 188–189 (GE), Ser-220, 242–244 (SLH), and Asn-321. Cys-364 functions as the S-methylcysteine intermediate in the catalytic mechanism.

This sequence belongs to the radical SAM superfamily. RlmN family. [4Fe-4S] cluster is required as a cofactor.

It localises to the cytoplasm. It catalyses the reaction adenosine(2503) in 23S rRNA + 2 reduced [2Fe-2S]-[ferredoxin] + 2 S-adenosyl-L-methionine = 2-methyladenosine(2503) in 23S rRNA + 5'-deoxyadenosine + L-methionine + 2 oxidized [2Fe-2S]-[ferredoxin] + S-adenosyl-L-homocysteine. The enzyme catalyses adenosine(37) in tRNA + 2 reduced [2Fe-2S]-[ferredoxin] + 2 S-adenosyl-L-methionine = 2-methyladenosine(37) in tRNA + 5'-deoxyadenosine + L-methionine + 2 oxidized [2Fe-2S]-[ferredoxin] + S-adenosyl-L-homocysteine. Functionally, specifically methylates position 2 of adenine 2503 in 23S rRNA and position 2 of adenine 37 in tRNAs. m2A2503 modification seems to play a crucial role in the proofreading step occurring at the peptidyl transferase center and thus would serve to optimize ribosomal fidelity. In Sodalis glossinidius (strain morsitans), this protein is Dual-specificity RNA methyltransferase RlmN.